The primary structure comprises 173 residues: Alpha-crystallin A chain (173 aa).

M1 bears the N-acetylmethionine mark. Positions 1–63 (MDIAIQHPWF…RTVLDSGISE (63 aa)) are required for complex formation with BFSP1 and BFSP2. Q6 is modified (deamidated glutamine; partial). The residue at position 45 (S45) is a Phosphoserine. Deamidated glutamine; partial is present on Q50. Positions 52–162 (LFRTVLDSGI…GHSERAIPVS (111 aa)) constitute a sHSP domain. An N6-acetyllysine modification is found at K70. Q90 bears the Deamidated glutamine; partial mark. At K99 the chain carries N6-acetyllysine. Position 100 (H100) interacts with Zn(2+). At N101 the chain carries Deamidated asparagine; partial. 2 residues coordinate Zn(2+): E102 and H107. A Phosphoserine modification is found at S122. Deamidated asparagine; partial is present on N123. The segment at 144–173 (PKIPSGMDAGHSERAIPVSREEKPGSAPSS) is disordered. A compositionally biased stretch (basic and acidic residues) spans 153-167 (GHSERAIPVSREEKP). H154 provides a ligand contact to Zn(2+). O-linked (GlcNAc) serine glycosylation is present at S162.

This sequence belongs to the small heat shock protein (HSP20) family. As to quaternary structure, heteromer composed of three CRYAA and one CRYAB subunits. Inter-subunit bridging via zinc ions enhances stability, which is crucial as there is no protein turn over in the lens. Can also form homodimers and homotetramers (dimers of dimers) which serve as the building blocks of homooligomers. Within homooligomers, the zinc-binding motif is created from residues of 3 different molecules. His-100 and Glu-102 from one molecule are ligands of the zinc ion, and His-107 and His-154 residues from additional molecules complete the site with tetrahedral coordination geometry. Part of a complex required for lens intermediate filament formation composed of BFSP1, BFSP2 and CRYAA. Post-translationally, acetylation at Lys-70 may increase chaperone activity. Undergoes age-dependent proteolytical cleavage at the C-terminus.

Its subcellular location is the cytoplasm. It localises to the nucleus. Functionally, contributes to the transparency and refractive index of the lens. Acts as a chaperone, preventing aggregation of various proteins under a wide range of stress conditions. Required for the correct formation of lens intermediate filaments as part of a complex composed of BFSP1, BFSP2 and CRYAA. This is Alpha-crystallin A chain (CRYAA) from Equus caballus (Horse).